A 700-amino-acid chain; its full sequence is non-specific serine/threonine protein kinase Cdc7 (700 aa).

A Protein kinase domain is found at Phe127–Phe644. ATP-binding positions include Ile133–Val141 and Lys163. Asp250 (proton acceptor) is an active-site residue.

Belongs to the protein kinase superfamily. Ser/Thr protein kinase family. Component of the Dbf4-dependent kinase (DDK) complex consisting of Cdc7 and the Dbf4 ortholog chif. Interacts with chif (via the processed polypeptide Chiffon-A); the interaction is direct.

It catalyses the reaction L-seryl-[protein] + ATP = O-phospho-L-seryl-[protein] + ADP + H(+). The enzyme catalyses L-threonyl-[protein] + ATP = O-phospho-L-threonyl-[protein] + ADP + H(+). Activated by chif. Inhibited by the synthetic compound XL413. Catalytic component of the Dbf4-dependent kinase (DDK) complex. Phosphorylates components of the pre-replication complex, including Mcm2 and, to a lesser extent, Mcm4. Phosphorylates histones, including H3 and H2B. Required for DNA replication and mitotic proliferation, including during the endoreplication and amplification stages of DNA replication in egg chamber follicle cells of the ovary. The polypeptide is non-specific serine/threonine protein kinase Cdc7 (Drosophila melanogaster (Fruit fly)).